Reading from the N-terminus, the 164-residue chain is Nucleotide-binding protein Acid345_2028 (164 aa).

The protein belongs to the YajQ family.

In terms of biological role, nucleotide-binding protein. The sequence is that of Nucleotide-binding protein Acid345_2028 from Koribacter versatilis (strain Ellin345).